We begin with the raw amino-acid sequence, 499 residues long: Bifunctional purine biosynthesis protein PurH (499 aa).

Residues Met1 to Thr144 form the MGS-like domain.

This sequence belongs to the PurH family.

The catalysed reaction is (6R)-10-formyltetrahydrofolate + 5-amino-1-(5-phospho-beta-D-ribosyl)imidazole-4-carboxamide = 5-formamido-1-(5-phospho-D-ribosyl)imidazole-4-carboxamide + (6S)-5,6,7,8-tetrahydrofolate. The enzyme catalyses IMP + H2O = 5-formamido-1-(5-phospho-D-ribosyl)imidazole-4-carboxamide. Its pathway is purine metabolism; IMP biosynthesis via de novo pathway; 5-formamido-1-(5-phospho-D-ribosyl)imidazole-4-carboxamide from 5-amino-1-(5-phospho-D-ribosyl)imidazole-4-carboxamide (10-formyl THF route): step 1/1. The protein operates within purine metabolism; IMP biosynthesis via de novo pathway; IMP from 5-formamido-1-(5-phospho-D-ribosyl)imidazole-4-carboxamide: step 1/1. This chain is Bifunctional purine biosynthesis protein PurH, found in Clostridium botulinum (strain Okra / Type B1).